Consider the following 81-residue polypeptide: Gamma-conotoxin-like TxMEKL-0511 (81 aa).

Residues 1-19 form the signal peptide; the sequence is MEKLTILLLVAAVLLSIQA. The propeptide occupies 20–45; that stretch reads LNQEKHQRAKINLLSKRKPPAERWWR. 3 disulfide bridges follow: cysteine 49/cysteine 63, cysteine 56/cysteine 67, and cysteine 62/cysteine 72.

Belongs to the conotoxin O2 superfamily. Expressed by the venom duct.

It is found in the secreted. Functionally, gamma-conotoxins may act on voltage-gated non-specific cation pacemaker channels (HCN). The protein is Gamma-conotoxin-like TxMEKL-0511 of Conus textile (Cloth-of-gold cone).